The chain runs to 131 residues: Large ribosomal subunit protein bL17 (131 aa).

This sequence belongs to the bacterial ribosomal protein bL17 family. As to quaternary structure, part of the 50S ribosomal subunit. Contacts protein L32.

In Oenococcus oeni (strain ATCC BAA-331 / PSU-1), this protein is Large ribosomal subunit protein bL17.